The chain runs to 127 residues: Fluoride-specific ion channel FluC 1 (127 aa).

The next 4 helical transmembrane spans lie at 4–24 (TLLAVFIGGGVGSMARWLVSL), 35–55 (VGTLIVNLVGAFIIGLTLALF), 71–91 (TGFCGGLTTFSTFSVEVVYLI), and 101–121 (GTILLNVAGSLAMTMLAFILV). Glycine 75 and threonine 78 together coordinate Na(+).

The protein belongs to the fluoride channel Fluc/FEX (TC 1.A.43) family.

The protein resides in the cell inner membrane. The enzyme catalyses fluoride(in) = fluoride(out). With respect to regulation, na(+) is not transported, but it plays an essential structural role and its presence is essential for fluoride channel function. Its function is as follows. Fluoride-specific ion channel. Important for reducing fluoride concentration in the cell, thus reducing its toxicity. This Yersinia pseudotuberculosis serotype I (strain IP32953) protein is Fluoride-specific ion channel FluC 1.